The primary structure comprises 86 residues: Large ribosomal subunit protein bL27 (86 aa).

Belongs to the bacterial ribosomal protein bL27 family.

The sequence is that of Large ribosomal subunit protein bL27 from Koribacter versatilis (strain Ellin345).